We begin with the raw amino-acid sequence, 487 residues long: MGCEVSKLCAFCCVSDPEGSNHGVTGLDEDRRGEGNDLPQFREFSIETLRNATSGFATENIVSEHGEKAPNVVYKGKLDNQRRIAVKRFNRKAWPDSRQFLEEAKAVGQLRNYRMANLLGCCYEGEERLLVAEFMPNETLAKHLFHWESQPMKWAMRLRVALHIAQALEYCTGKGRALYHDLNAYRVLFDDDSNPRLSCFGLMKNSRDGKSYSTNLAFTPPEYLRTGRVTPESVMYSYGTLLLDLLSGKHIPPSHALDLIRDRNIQMLIDSCLEGQFSSDDGTELIRLASRCLQYEPRERPNPKSLVTAMIPLQKDLETPSHQLMGIPSSASTTPLSPLGEACLRTDLTAIHEILEKLSYKDDEGAATELSFQMWTNQMQDSLNFKKKGDVAFRHKEFANAIDCYSQFIEGGTMVSPTVYARRSLCYLMNEMPQEALNDAMQAQVISPAWHIASYLQAVALSALGQENEAHAALKDGSMLESKRNRL.

G2 is lipidated: N-myristoyl glycine. Positions 59 to 325 constitute a Protein kinase domain; it reads ENIVSEHGEK…DLETPSHQLM (267 aa). Residues 65 to 73 and K87 each bind ATP; that span reads HGEKAPNVV. The Proton acceptor role is filled by D181.

Belongs to the protein kinase superfamily. Ser/Thr protein kinase family.

It localises to the cell membrane. It catalyses the reaction L-seryl-[protein] + ATP = O-phospho-L-seryl-[protein] + ADP + H(+). The catalysed reaction is L-threonyl-[protein] + ATP = O-phospho-L-threonyl-[protein] + ADP + H(+). In terms of biological role, probable serine/threonine kinase that acts as a positive regulator of brassinosteroid (BR) signaling downstream of the receptor kinase BRI1. Functions redundantly with BSK3, BSK5, BSK6 and BSK8. This Arabidopsis thaliana (Mouse-ear cress) protein is Serine/threonine-protein kinase BSK7.